The chain runs to 48 residues: Fimbrial assembly protein, serogroup A1 (48 aa).

This Dichelobacter nodosus (Bacteroides nodosus) protein is Fimbrial assembly protein, serogroup A1 (fimB).